Reading from the N-terminus, the 650-residue chain is AP-1-like transcription factor YAP1 (650 aa).

The tract at residues 1-89 (MSVSTAKRSL…AFRERKERKM (89 aa)) is disordered. Phosphoserine is present on residues serine 9, serine 14, and serine 17. Composition is skewed to basic and acidic residues over residues 22–50 (EGSKSRHDEIENEHRRTGTRDGEDSEQPK), 58–68 (KKQDLDPETKQ), and 80–89 (AFRERKERKM). 2 short sequence motifs (bipartite nuclear localization signal) span residues 35–42 (HRRTGTRD) and 68–75 (QKRTAQNR). A bZIP domain is found at 64-127 (PETKQKRTAQ…ITLVNELKKY (64 aa)). Positions 67 to 90 (KQKRTAQNRAAQRAFRERKERKMK) are basic motif. The segment at 92–120 (LEKKVQSLESIQQQNEVEATFLRDQLITL) is leucine-zipper. Disordered regions lie at residues 149-169 (HFSKNNVNHSNSEPIDTPNDD) and 183-251 (QYPL…PNSS). Positions 150 to 162 (FSKNNVNHSNSEP) are enriched in polar residues. Threonine 165 carries the post-translational modification Phosphothreonine. A compositionally biased stretch (polar residues) spans 195-209 (SKNVGKQLPSPNDPS). A Phosphoserine modification is found at serine 204. The segment at 220 to 378 (QKKLSDATDS…YENSFSGFGR (159 aa)) is transcription activation 1. Over residues 226 to 246 (ATDSSSATLDSLSNSNDVLNN) the composition is skewed to low complexity. Residues 303-315 (CSKMNQVCGTRQC) are n-CRD. Intrachain disulfides connect cysteine 303–cysteine 598, cysteine 310–cysteine 629, cysteine 598–cysteine 620, cysteine 598–cysteine 629, and cysteine 620–cysteine 629. A Phosphoserine modification is found at serine 372. Positions 392–414 (DNSTGSTDSTGSTGNKNKKNNNN) are enriched in low complexity. 3 disordered regions span residues 392–419 (DNSTGSTDSTGSTGNKNKKNNNNSDDVL), 510–532 (LFGEFLEDDDDDKKAANMSDDES), and 551–591 (LQSV…VPSK). Positions 430–537 (NQVTNFFSPG…SDDESSLIKN (108 aa)) are transcription activation 2. Position 528 is a phosphoserine (serine 528). Positions 551–570 (LQSVPGNESEISQKNGSSLQ) are enriched in polar residues. Positions 571–580 (NADKINNGND) are enriched in low complexity. Residues 598 to 629 (CSEIWDRITTHPKYSDIDVDGLCSELMAKAKC) are c-CRD. A Nuclear export signal motif is present at residues 614 to 621 (IDVDGLCS).

The protein belongs to the bZIP family. YAP subfamily. In terms of assembly, interacts independent of oxidation state in the cytoplasm with the karyopherin PSE1/KAP121 (and less strongly with KAP123). The reduced form of YAP1 interacts in the nucleus with the nuclear export protein CRM1, and in the cytoplasm with YBP1 and the peroxiredoxin HYR1/GPX3/ORP1. Interacts with RBG1. Post-translationally, depending on the oxidative stress inducing agent, YAP1 can undergo two distinct conformational changes, both involving disulfide bond formation, and both masking the nuclear export signal, thus abolishing nuclear export by CRM1/exportin 1. The disulfide stress-inducing agent diamide leads to the formation of one of three possible disulfide bonds in the c-CRD. Peroxide stress induces the formation of the HYR1/GPX3- and YBP1-dependent interdomain disulfide bond between Cys-303 and Cys-598 (causing nuclear localization of YAP1), and the possibly stabilizing bond between Cys-310 and Cys-629 (required for full activity of YAP1).

The protein resides in the nucleus. The protein localises to the cytoplasm. In terms of biological role, transcription activator involved in oxidative stress response and redox homeostasis. Regulates the transcription of genes encoding antioxidant enzymes and components of the cellular thiol-reducing pathways, including the thioredoxin system (TRX2, TRR1), the glutaredoxin system (GSH1, GLR1), superoxide dismutase (SOD1, SOD2), glutathione peroxidase (GPX2), and thiol-specific peroxidases (TSA1, AHP1). The induction of some of these genes requires the cooperative action of both, YAP1 and SKN7. Preferentially binds to promoters with the core binding site 5'-TTA[CG]TAA-3'. Activity of the transcription factor is controlled through oxidation of specific cysteine residues resulting in the alteration of its subcellular location. Oxidative stress (as well as carbon stress, but not increased temperature, acidic pH, or ionic stress) induces nuclear accumulation and as a result YAP1 transcriptional activity. Activation by hydrogen peroxide or thiol-reactive chemicals elicit distinct adaptive gene responses. Nuclear export is restored when disulfide bonds are reduced by thioredoxin (TRX2), whose expression is controlled by YAP1, providing a mechanism for negative autoregulation. When overexpressed, YAP1 confers pleiotropic drug-resistance and increases cellular tolerance to cadmium, iron chelators and zinc. The sequence is that of AP-1-like transcription factor YAP1 from Saccharomyces cerevisiae (strain ATCC 204508 / S288c) (Baker's yeast).